The primary structure comprises 430 residues: Glutamyl-tRNA reductase (430 aa).

Residues 50 to 53 (TCNR), serine 108, 113 to 115 (EPQ), and glutamine 119 contribute to the substrate site. The Nucleophile role is filled by cysteine 51. 188–193 (GAGEMA) lines the NADP(+) pocket.

This sequence belongs to the glutamyl-tRNA reductase family. In terms of assembly, homodimer.

The enzyme catalyses (S)-4-amino-5-oxopentanoate + tRNA(Glu) + NADP(+) = L-glutamyl-tRNA(Glu) + NADPH + H(+). The protein operates within porphyrin-containing compound metabolism; protoporphyrin-IX biosynthesis; 5-aminolevulinate from L-glutamyl-tRNA(Glu): step 1/2. Its function is as follows. Catalyzes the NADPH-dependent reduction of glutamyl-tRNA(Glu) to glutamate 1-semialdehyde (GSA). This is Glutamyl-tRNA reductase from Desulfovibrio desulfuricans (strain ATCC 27774 / DSM 6949 / MB).